Reading from the N-terminus, the 489-residue chain is MAAAALSRTLLPEARRRLWGFTRRLPLRRAAAQPLYFGGDRLRSTQAAPQVVLNVPETQVTCLENGLRVASENSGLSTCTVGLWIDAGSRYENEKNNGTAHFLEHMAFKGTKKRSQLDLELEIENMGAHLNAYTSREQTVYYAKAFSRDLPRAVEILADIIQNSTLGEAEIERERGVILREMQEVETNLQEVVFDYLHATAYQNTALGRTILGPTENIKSINRKDLVDYITTHYKGPRIVLAAAGGVCHNELLELAKFHFGDSLCSHKGAIPALPPCKFTGSEIRVRDDKMPLAHLAIAVEAVGWAHPDTICLMVANTLIGNWDRSFGGGMNLSSKLAQLTCHGNLCHSFQSFNTSYTDTGLWGLYMVCEQATVADMLHVVQNEWKRLCTDVTESEVARAKNLLKTNMLLQLDGSTPICEDIGRQMLCYNRRIPIPELEARIDAVDAETVRRVCTKYIHDKSPAIAALGPIERLPDFNQICSNMRWIRD.

The transit peptide at 1–45 (MAAAALSRTLLPEARRRLWGFTRRLPLRRAAAQPLYFGGDRLRST) directs the protein to the mitochondrion. Residue histidine 101 participates in Zn(2+) binding. Glutamate 104 functions as the Proton acceptor in the catalytic mechanism. Zn(2+) is bound by residues histidine 105 and glutamate 181.

It belongs to the peptidase M16 family. Heterodimer of PMPCA (alpha) and PMPCB (beta) subunits, forming the mitochondrial processing protease (MPP) in which PMPCA is involved in substrate recognition and binding and PMPCB is the catalytic subunit. Zn(2+) serves as cofactor.

It localises to the mitochondrion matrix. It catalyses the reaction Release of N-terminal transit peptides from precursor proteins imported into the mitochondrion, typically with Arg in position P2.. With respect to regulation, binding to PMPCA is required for catalytic activity. Functionally, catalytic subunit of the essential mitochondrial processing protease (MPP), which cleaves the mitochondrial sequence off newly imported precursors proteins. Preferentially, cleaves after an arginine at position P2. Required for PINK1 turnover by coupling PINK1 mitochondrial import and cleavage, which results in subsequent PINK1 proteolysis. This is Mitochondrial-processing peptidase subunit beta (Pmpcb) from Mus musculus (Mouse).